We begin with the raw amino-acid sequence, 245 residues long: Demethylmenaquinone methyltransferase (245 aa).

S-adenosyl-L-methionine is bound by residues Thr-62, Asp-80, 105–106, and Ser-122; that span reads DA.

The protein belongs to the class I-like SAM-binding methyltransferase superfamily. MenG/UbiE family.

It catalyses the reaction a 2-demethylmenaquinol + S-adenosyl-L-methionine = a menaquinol + S-adenosyl-L-homocysteine + H(+). Its pathway is quinol/quinone metabolism; menaquinone biosynthesis; menaquinol from 1,4-dihydroxy-2-naphthoate: step 2/2. Methyltransferase required for the conversion of demethylmenaquinol (DMKH2) to menaquinol (MKH2). In Clavibacter sepedonicus (Clavibacter michiganensis subsp. sepedonicus), this protein is Demethylmenaquinone methyltransferase.